We begin with the raw amino-acid sequence, 289 residues long: 4-hydroxy-tetrahydrodipicolinate synthase (289 aa).

Residue T43 participates in pyruvate binding. Y131 serves as the catalytic Proton donor/acceptor. Catalysis depends on K160, which acts as the Schiff-base intermediate with substrate. V200 serves as a coordination point for pyruvate.

This sequence belongs to the DapA family. As to quaternary structure, homotetramer; dimer of dimers.

The protein localises to the cytoplasm. It carries out the reaction L-aspartate 4-semialdehyde + pyruvate = (2S,4S)-4-hydroxy-2,3,4,5-tetrahydrodipicolinate + H2O + H(+). The protein operates within amino-acid biosynthesis; L-lysine biosynthesis via DAP pathway; (S)-tetrahydrodipicolinate from L-aspartate: step 3/4. Its function is as follows. Catalyzes the condensation of (S)-aspartate-beta-semialdehyde [(S)-ASA] and pyruvate to 4-hydroxy-tetrahydrodipicolinate (HTPA). The chain is 4-hydroxy-tetrahydrodipicolinate synthase from Methanococcus maripaludis (strain DSM 14266 / JCM 13030 / NBRC 101832 / S2 / LL).